Reading from the N-terminus, the 448-residue chain is MGKYFGTDGVRGVANKELTPELAFKIGRFGGYVLTKDTNRPKVIIGRDTRVSGHMLEGALVAGLLSIGAEVMRLGVISTPGVAYLTKALDAQAGVMISASHNPVQDNGIKFFGADGFKLTDEQEAEIEALLDKEVDELPRPIGTNLGQVNDYFEGGQKYLQYIKQTVEEDFSGLHIALDCAHGATSSLAPYLFADLEADISTMGTSPNGMNINDGVGSTHPEGLAELVKEKGADIGLAFDGDGDRLIAVDEKGNIVDGDQIMYICAKYMKETGQLKHNTVVSTVMSNLGFYKALEANGITSDKTAVGDRYVMEEMKRGGYNLGGEQSGHIIMLDYITTGDGMLSALQLVNIMKVTKKPLSELASEMKKFPQLLVNVRVTDKKLALENEKIKEIIRVVEEEMNGDGRVLVRPSGTEPLIRVMAEAPTQELCNEYVHRIVDVVKAEVGAE.

The active-site Phosphoserine intermediate is S100. Mg(2+)-binding residues include S100, D240, D242, and D244. Phosphoserine is present on S100.

Belongs to the phosphohexose mutase family. Requires Mg(2+) as cofactor. In terms of processing, activated by phosphorylation.

The catalysed reaction is alpha-D-glucosamine 1-phosphate = D-glucosamine 6-phosphate. Catalyzes the conversion of glucosamine-6-phosphate to glucosamine-1-phosphate. This Bacillus cytotoxicus (strain DSM 22905 / CIP 110041 / 391-98 / NVH 391-98) protein is Phosphoglucosamine mutase.